The chain runs to 342 residues: Serine/threonine-protein kinase ISR1 (342 aa).

The 284-residue stretch at 59–342 folds into the Protein kinase domain; it reads WRLTRVLGCG…SNARVAEHAF (284 aa). ATP-binding positions include 65–73 and Lys84; that span reads LGCGSVACV. Asp190 serves as the catalytic Proton acceptor.

The protein belongs to the protein kinase superfamily. Ser/Thr protein kinase family.

It catalyses the reaction L-seryl-[protein] + ATP = O-phospho-L-seryl-[protein] + ADP + H(+). The catalysed reaction is L-threonyl-[protein] + ATP = O-phospho-L-threonyl-[protein] + ADP + H(+). Probable serine/threonine protein kinase which may function redundantly with MPK1-independent branch of the PCK1 pathway. The protein is Serine/threonine-protein kinase ISR1 (ISR1) of Eremothecium gossypii (strain ATCC 10895 / CBS 109.51 / FGSC 9923 / NRRL Y-1056) (Yeast).